Consider the following 343-residue polypeptide: MATLNELAELIGGEVVGDGSVVLNRMAPIESAGPGDITFVANPKYLAKLKDTTASAVIVKAGIECPGVNLLICANPYLAFAKVLTALHAQRPAPQGVMDGAWVDPSAELGADVTVHPGCVVGKNVRVGRGTILYPGVVLYDDVQVGEDCLVHAGVLVREQCRLGNRVVVQPGAVIGSDGFGFAPDGKSYYKIPQVGIVAIEDDVEVGANVCIDRAAMGVTLIKRGTKIDNLVQIAHNVSIGEDTILVAQVGIAGSSKVGDHCTLGGQVGVSGHLKIGDNTMVGAQSGIISDLPAGQVFSGTPTMPHREWLKASASMRSLPAMRKTVSNLQKRIEELEKLIKER.

His236 serves as the catalytic Proton acceptor.

This sequence belongs to the transferase hexapeptide repeat family. LpxD subfamily. As to quaternary structure, homotrimer.

The catalysed reaction is a UDP-3-O-[(3R)-3-hydroxyacyl]-alpha-D-glucosamine + a (3R)-hydroxyacyl-[ACP] = a UDP-2-N,3-O-bis[(3R)-3-hydroxyacyl]-alpha-D-glucosamine + holo-[ACP] + H(+). It functions in the pathway bacterial outer membrane biogenesis; LPS lipid A biosynthesis. Functionally, catalyzes the N-acylation of UDP-3-O-acylglucosamine using 3-hydroxyacyl-ACP as the acyl donor. Is involved in the biosynthesis of lipid A, a phosphorylated glycolipid that anchors the lipopolysaccharide to the outer membrane of the cell. This chain is UDP-3-O-acylglucosamine N-acyltransferase, found in Syntrophotalea carbinolica (strain DSM 2380 / NBRC 103641 / GraBd1) (Pelobacter carbinolicus).